The chain runs to 180 residues: uncharacterized protein (180 aa).

The disordered stretch occupies residues 1 to 93 (MPSSVPKTSI…LPRRRNPGWV (93 aa)). Low complexity-rich tracts occupy residues 9 to 25 (SIESLGSPSSLSSSQAS) and 47 to 64 (LTSSTESLGYLSSLSSSQ).

This is an uncharacterized protein from Homo sapiens (Human).